The chain runs to 364 residues: Palmitoyltransferase ZDHHC9 (364 aa).

Over M1–K35 the chain is Cytoplasmic. A helical membrane pass occupies residues G36–E56. Residues C57–Q63 lie on the Lumenal side of the membrane. The chain crosses the membrane as a helical span at residues L64–L84. Topologically, residues R85–Y183 are cytoplasmic. Positions K139 to L189 constitute a DHHC domain. The S-palmitoyl cysteine intermediate role is filled by C169. A helical membrane pass occupies residues F184–V204. The Lumenal segment spans residues Y205–E228. Residues V229–L249 form a helical membrane-spanning segment. Topologically, residues V250 to K364 are cytoplasmic. Residues P303–K364 form a disordered region. Residues R310–P323 show a composition bias toward polar residues. Pro residues predominate over residues E346–P356.

This sequence belongs to the DHHC palmitoyltransferase family. ERF2/ZDHHC9 subfamily. As to quaternary structure, interacts with GOLGA7. As to expression, highly expressed in kidney, skeletal muscle, brain, lung and liver. Absent in thymus, spleen and leukocytes.

The protein localises to the endoplasmic reticulum membrane. It localises to the golgi apparatus membrane. It catalyses the reaction L-cysteinyl-[protein] + hexadecanoyl-CoA = S-hexadecanoyl-L-cysteinyl-[protein] + CoA. In terms of biological role, palmitoyltransferase that catalyzes the addition of palmitate onto various protein substrates, such as ADRB2, GSDMD, HRAS, NRAS and CGAS. The ZDHHC9-GOLGA7 complex is a palmitoyltransferase specific for HRAS and NRAS. May have a palmitoyltransferase activity toward the beta-2 adrenergic receptor/ADRB2 and therefore regulate G protein-coupled receptor signaling. Acts as a regulator of innate immunity by catalyzing palmitoylation of CGAS, thereby promoting CGAS homodimerization and cyclic GMP-AMP synthase activity. Activates pyroptosis by catalyzing palmitoylation of gasdermin-D (GSDMD), thereby promoting membrane translocation and pore formation of GSDMD. Its function is as follows. (Microbial infection) Through a sequential action with ZDHHC20, rapidly and efficiently palmitoylates SARS coronavirus-2/SARS-CoV-2 spike protein following its synthesis in the endoplasmic reticulum (ER). In the infected cell, promotes spike biogenesis by protecting it from premature ER degradation, increases half-life and controls the lipid organization of its immediate membrane environment. Once the virus has formed, spike palmitoylation controls fusion with the target cell. The chain is Palmitoyltransferase ZDHHC9 from Homo sapiens (Human).